Consider the following 1053-residue polypeptide: Translation initiation factor IF-2 (1053 aa).

The segment covering 1 to 20 has biased composition (polar residues); the sequence is MSESKNSGENTLSVTPTKTL. The segment at 1–442 is disordered; it reads MSESKNSGEN…TATGGEEEER (442 aa). 2 stretches are compositionally biased toward low complexity: residues 64 to 76 and 83 to 102; these read EAAPTPAPAATVT and RPAAPNPTAAPTTPPAAAVP. Composition is skewed to pro residues over residues 131 to 141 and 150 to 161; these read PAQPKAEPVPA and APVPPVPAPSAP. Low complexity predominate over residues 178–220; it reads PVSQAKPIQTAPVQTAPAAQASASQTTGPRPVAAGPRPATGAA. The span at 255-264 shows a compositional bias: gly residues; it reads GGRGGPGRGE. Composition is skewed to basic and acidic residues over residues 279 to 288 and 295 to 353; these read LTDEEREARA and RIRE…EAKR. Residues 375-386 show a composition bias toward low complexity; that stretch reads TATAAAPAAAAP. One can recognise a tr-type G domain in the interval 550–720; that stretch reads PRPPVVTIMG…ALQAELLDLK (171 aa). Residues 559-566 form a G1 region; the sequence is GHVDHGKT. GTP is bound at residue 559-566; the sequence is GHVDHGKT. Positions 584–588 are G2; that stretch reads GITQH. Residues 606–609 form a G3 region; the sequence is DTPG. Residues 606-610 and 660-663 contribute to the GTP site; these read DTPGH and NKID. Positions 660-663 are G4; sequence NKID. Residues 696 to 698 are G5; sequence SAT.

This sequence belongs to the TRAFAC class translation factor GTPase superfamily. Classic translation factor GTPase family. IF-2 subfamily.

The protein resides in the cytoplasm. Its function is as follows. One of the essential components for the initiation of protein synthesis. Protects formylmethionyl-tRNA from spontaneous hydrolysis and promotes its binding to the 30S ribosomal subunits. Also involved in the hydrolysis of GTP during the formation of the 70S ribosomal complex. The polypeptide is Translation initiation factor IF-2 (Beijerinckia indica subsp. indica (strain ATCC 9039 / DSM 1715 / NCIMB 8712)).